Here is a 123-residue protein sequence, read N- to C-terminus: UPF0426 protein At1g28150, chloroplastic (123 aa).

A chloroplast-targeting transit peptide spans 1 to 26; it reads MGFVLICTCPPSSGVVVSQLHHHQFS. The disordered stretch occupies residues 97–123; sequence SGITEEEVDADGVVSNDEDSPQQIEIE. A compositionally biased stretch (acidic residues) spans 100–123; sequence TEEEVDADGVVSNDEDSPQQIEIE.

Belongs to the UPF0426 family.

The protein localises to the plastid. It localises to the chloroplast. It is found in the plastoglobule. In Arabidopsis thaliana (Mouse-ear cress), this protein is UPF0426 protein At1g28150, chloroplastic.